The sequence spans 323 residues: Ficolin-2 (323 aa).

Positions 1–26 (MDTRGVAAAMRPLVLLVAFLCTAAPA) are cleaved as a signal peptide. The 51-residue stretch at 52 to 102 (GLPGAAGPKGEAGASGPKGGQGPPGAPGEPGPPGPKGDRGEKGEPGPKGES) folds into the Collagen-like domain. The segment covering 55–66 (GAAGPKGEAGAS) has biased composition (low complexity). The segment at 55 to 107 (GAAGPKGEAGASGPKGGQGPPGAPGEPGPPGPKGDRGEKGEPGPKGESWETEQ) is disordered. The span at 75–86 (PGAPGEPGPPGP) shows a compositional bias: pro residues. Residues 87-102 (KGDRGEKGEPGPKGES) are compositionally biased toward basic and acidic residues. A Fibrinogen C-terminal domain is found at 106-323 (EQCLTGPRTC…KVSEMKFRAT (218 aa)). Cystine bridges form between cysteine 108/cysteine 136 and cysteine 115/cysteine 143. N-linked (GlcNAc...) asparagine glycosylation is present at asparagine 249. 3 residues coordinate Ca(2+): aspartate 259, aspartate 261, and serine 265. Cysteine 267 and cysteine 280 are oxidised to a cystine. Residues asparagine 302 and asparagine 310 are each glycosylated (N-linked (GlcNAc...) asparagine).

The protein belongs to the ficolin lectin family. Homotrimer. Interacts with elastin. Interacts with MASP1 and MASP2. Mainly expressed in skeletal muscle.

The protein resides in the secreted. May function in innate immunity through activation of the lectin complement pathway. Calcium-dependent and GlcNAc-binding lectin. The polypeptide is Ficolin-2 (FCN2) (Sus scrofa (Pig)).